A 193-amino-acid polypeptide reads, in one-letter code: Peptidyl-tRNA hydrolase (193 aa).

His-17 contributes to the tRNA binding site. The active-site Proton acceptor is the His-22. 3 residues coordinate tRNA: Phe-68, Asn-70, and Asn-116.

This sequence belongs to the PTH family. As to quaternary structure, monomer.

It is found in the cytoplasm. The enzyme catalyses an N-acyl-L-alpha-aminoacyl-tRNA + H2O = an N-acyl-L-amino acid + a tRNA + H(+). Its function is as follows. Hydrolyzes ribosome-free peptidyl-tRNAs (with 1 or more amino acids incorporated), which drop off the ribosome during protein synthesis, or as a result of ribosome stalling. Functionally, catalyzes the release of premature peptidyl moieties from peptidyl-tRNA molecules trapped in stalled 50S ribosomal subunits, and thus maintains levels of free tRNAs and 50S ribosomes. The chain is Peptidyl-tRNA hydrolase from Xanthomonas euvesicatoria pv. vesicatoria (strain 85-10) (Xanthomonas campestris pv. vesicatoria).